Here is a 146-residue protein sequence, read N- to C-terminus: Hemoglobin subunit beta (146 aa).

The residue at position 1 (Val-1) is an N-acetylvaline. One can recognise a Globin domain in the interval 2-146; that stretch reads HLSADEKNAL…VANALAHKYH (145 aa). Phosphoserine is present on Ser-44. An N6-acetyllysine modification is found at Lys-59. His-63 is a binding site for heme b. Lys-82 is modified (N6-acetyllysine). Residue His-92 coordinates heme b. S-nitrosocysteine is present on Cys-93. Position 144 is an N6-acetyllysine (Lys-144).

Belongs to the globin family. In terms of assembly, heterotetramer of two alpha chains and two beta chains. In terms of tissue distribution, red blood cells.

Involved in oxygen transport from the lung to the various peripheral tissues. In Sciurus carolinensis (Eastern gray squirrel), this protein is Hemoglobin subunit beta.